Reading from the N-terminus, the 141-residue chain is Nucleoside diphosphate kinase (141 aa).

Lys-11, Phe-59, Arg-87, Thr-93, Arg-104, and Asn-114 together coordinate ATP. The Pros-phosphohistidine intermediate role is filled by His-117.

Belongs to the NDK family. In terms of assembly, homotetramer. It depends on Mg(2+) as a cofactor.

It is found in the cytoplasm. It carries out the reaction a 2'-deoxyribonucleoside 5'-diphosphate + ATP = a 2'-deoxyribonucleoside 5'-triphosphate + ADP. It catalyses the reaction a ribonucleoside 5'-diphosphate + ATP = a ribonucleoside 5'-triphosphate + ADP. Its function is as follows. Major role in the synthesis of nucleoside triphosphates other than ATP. The ATP gamma phosphate is transferred to the NDP beta phosphate via a ping-pong mechanism, using a phosphorylated active-site intermediate. This is Nucleoside diphosphate kinase from Acidovorax ebreus (strain TPSY) (Diaphorobacter sp. (strain TPSY)).